The following is a 68-amino-acid chain: Conotoxin ArMMSK-01 (68 aa).

The signal sequence occupies residues 1-20 (MMSKLGVLLTICMLLFPLTA). A propeptide spanning residues 21–51 (LPLDGDQPADRPAERMQDDFISEQHPLFNPI) is cleaved from the precursor. Intrachain disulfides connect Cys54–Cys67, Cys55–Cys63, and Cys59–Cys66. 4-hydroxyproline is present on Pro65.

Belongs to the conotoxin M superfamily. In terms of tissue distribution, expressed by the venom duct.

Its subcellular location is the secreted. The chain is Conotoxin ArMMSK-01 from Conus arenatus (Sand-dusted cone).